Here is an 878-residue protein sequence, read N- to C-terminus: MFNFLFSNKINQYQRIVKQINSLDSTYNKYSDQELKQQTNKLKDQIIATQDIDTILPKAFAITKEAIKRATGLLLFDVQLIGAIILNQGKIAEMKTGEGKTLVAMLTAYLNSLFNKGVHIVTVNEYLAKRDATLAKQIFEYLNIHIGIIDQSMHSQERKKQYSCDITYLTNSELGFDYLRDNMAIQKEDLVQRDFFFAIIDEIDSILIDEARTPLIISGPANNKLTEYLEANKVANLLNQNTDYEIDEKNKNIILNENGIKKSENILDINNLYDIQKPWIKYILNALKAKEIFIKNKDYIVKNNEIVIVDEFTGRIMEGRRWSDGLHQAIEAKEKQKIQQENKTLASITYQNLFLLYEKLSGMTGTAKTEEAELEQIYKLKVVEIPTNKLNQRKDLSDLVYKTEYVKWKAVANECFDMYQIGRPTLVGTTSIEKSELLAKILKELQVPYNLLNRKPENITRESEIITQAGRKYTITISTNMAGRGTDIILGGNPQILAKTALTIHINKILNLTQYNTNYKIENEITYILNSINNTLLINNIDINSQDISQSINNIINNNMIQDAKSYKISNIYKIVLNKYKQLCHNEKQEIITLGGLYVIGTERHESRRIDNQLRGRSGRQGDLRSSRFFLSLQDNLLKIFGGDKISDFMQNLNIDEDMPIESSILNKSLSSAQKKIEAYFYDVRKQLFEYDEVLNNQRQAIYIERKRLLKSNYTRDCILEYAESTIEEMLVTYNQQTDISEKTKILSKILKLLNLNIYINNNILLNMEENDIKSFLFEQLRITYDLRESYLEQLRPGLIRQLEKYYLLQQIDYAWQEHINKISILKESIGWRSYGQQDPLIEYKNEAFNLFINMVTYIRQTVIYLTMRSRLIVNIDN.

ATP is bound by residues Gln-79, 97 to 101 (GEGKT), and Asp-487.

It belongs to the SecA family.

Its subcellular location is the plastid. The protein resides in the chloroplast stroma. It is found in the chloroplast thylakoid membrane. It carries out the reaction ATP + H2O + cellular proteinSide 1 = ADP + phosphate + cellular proteinSide 2.. Has a central role in coupling the hydrolysis of ATP to the transfer of proteins across the thylakoid membrane. This is Protein translocase subunit SecA from Antithamnion sp. (Red alga).